The following is a 362-amino-acid chain: Putative F-box/kelch-repeat protein At3g20710 (362 aa).

The F-box domain occupies 1–50 (MMMSNLPKDLVEEILSRVPFKYLRAIRSTCKNWYDLSKNRSFANKNIDKA). Kelch repeat units lie at residues 150–201 (YDKS…VSLN) and 293–341 (IYCR…YFKS).

The chain is Putative F-box/kelch-repeat protein At3g20710 from Arabidopsis thaliana (Mouse-ear cress).